A 196-amino-acid polypeptide reads, in one-letter code: Regulator of G-protein signaling 8 (196 aa).

Position 26 is a phosphoserine (S26). The 117-residue stretch at 72–188 (SFDVLLSHKY…LRSKMYLDLL (117 aa)) folds into the RGS domain.

In terms of assembly, interacts with GNAO1 and GNAI3.

The protein localises to the cell membrane. Its subcellular location is the membrane. The protein resides in the perikaryon. It localises to the cell projection. It is found in the dendrite. The protein localises to the nucleus. In terms of biological role, regulates G protein-coupled receptor signaling cascades, including signaling via muscarinic acetylcholine receptor CHRM2 and dopamine receptor DRD2. Inhibits signal transduction by increasing the GTPase activity of G protein alpha subunits, thereby driving them into their inactive GDP-bound form. Modulates the activity of potassium channels that are activated in response to DRD2 and CHRM2 signaling. This chain is Regulator of G-protein signaling 8 (RGS8), found in Macaca fascicularis (Crab-eating macaque).